The chain runs to 342 residues: UDP-3-O-acylglucosamine N-acyltransferase (342 aa).

The active-site Proton acceptor is H242.

Belongs to the transferase hexapeptide repeat family. LpxD subfamily. In terms of assembly, homotrimer.

It carries out the reaction a UDP-3-O-[(3R)-3-hydroxyacyl]-alpha-D-glucosamine + a (3R)-hydroxyacyl-[ACP] = a UDP-2-N,3-O-bis[(3R)-3-hydroxyacyl]-alpha-D-glucosamine + holo-[ACP] + H(+). Its pathway is bacterial outer membrane biogenesis; LPS lipid A biosynthesis. Functionally, catalyzes the N-acylation of UDP-3-O-acylglucosamine using 3-hydroxyacyl-ACP as the acyl donor. Is involved in the biosynthesis of lipid A, a phosphorylated glycolipid that anchors the lipopolysaccharide to the outer membrane of the cell. The sequence is that of UDP-3-O-acylglucosamine N-acyltransferase from Leptothrix cholodnii (strain ATCC 51168 / LMG 8142 / SP-6) (Leptothrix discophora (strain SP-6)).